A 660-amino-acid polypeptide reads, in one-letter code: Polyadenylation factor subunit 2 (660 aa).

Over residues M1–G12 the composition is skewed to basic and acidic residues. Residues M1–V32 form a disordered region. 7 WD repeats span residues K94–I133, A136–R176, G177–T216, G219–T258, G261–L301, G304–D344, and A376–E415. A disordered region spans residues K562–R660. Pro residues predominate over residues Q566 to I610.

Its subcellular location is the nucleus. In terms of biological role, required for 3'-end cleavage and polyadenylation of pre-mRNAs. Also involved in chromosome segregation where it has a role in chromosome attachment to the mitotic spindle. The protein is Polyadenylation factor subunit 2 (paa-1) of Neurospora crassa (strain ATCC 24698 / 74-OR23-1A / CBS 708.71 / DSM 1257 / FGSC 987).